A 131-amino-acid polypeptide reads, in one-letter code: Bacteriohemerythrin (131 aa).

Fe cation-binding residues include His-20, Glu-23, His-56, Glu-60, His-75, His-79, His-117, and Asp-122.

Belongs to the hemerythrin family. Monomer.

In terms of biological role, oxygen-binding protein. May be involved in a storage mechanism or for delivery to oxygen-requiring enzymes. The oxygen-binding site contains two iron atoms. In Aquifex aeolicus (strain VF5), this protein is Bacteriohemerythrin.